The chain runs to 274 residues: Diaminopimelate epimerase (274 aa).

3 residues coordinate substrate: Asn-11, Gln-44, and Asn-64. Cys-73 serves as the catalytic Proton donor. Residues 74–75 (GN), Asn-157, Asn-190, and 208–209 (ER) each bind substrate. The active-site Proton acceptor is the Cys-217. 218–219 (GS) provides a ligand contact to substrate.

It belongs to the diaminopimelate epimerase family. Homodimer.

The protein localises to the cytoplasm. The enzyme catalyses (2S,6S)-2,6-diaminopimelate = meso-2,6-diaminopimelate. It functions in the pathway amino-acid biosynthesis; L-lysine biosynthesis via DAP pathway; DL-2,6-diaminopimelate from LL-2,6-diaminopimelate: step 1/1. Catalyzes the stereoinversion of LL-2,6-diaminopimelate (L,L-DAP) to meso-diaminopimelate (meso-DAP), a precursor of L-lysine and an essential component of the bacterial peptidoglycan. This is Diaminopimelate epimerase from Glaesserella parasuis serovar 5 (strain SH0165) (Haemophilus parasuis).